The primary structure comprises 474 residues: DNA-binding protein (474 aa).

The segment at 1–34 (MAGRQREHPTVTPYLQETSPERPPPLPPKKKLRK) is disordered. Position 142 is a phosphotyrosine; by host (Tyr142). Residues Cys231 and His233 each contribute to the Zn(2+) site. Residues 244 to 278 (VEVDVGSENGQRALKEQPSKTKVVQNRWGRSVVQI) form a flexible loop region. Zn(2+)-binding residues include Cys286, Cys302, Cys343, Cys345, Cys397, and Cys413. Residues 460–474 (VALPTGHGDAEVEPF) form a C-terminal arm, DBP binding region.

This sequence belongs to the adenoviridae E2A DNA-binding protein family. Homomultimerizes on viral ssDNA bound to pTP. Forms a initiation complex with viral polymerase, pTP and hosts NFIA and POU2F1/OCT1. Interacts with host SRCAP.

The protein resides in the host nucleus. Plays a role in the elongation phase of viral strand displacement replication by unwinding the template in an ATP-independent fashion, employing its capacity to form multimers. Also enhances the rate of initiation. Released from template upon second strand synthesis. Assembles in complex with viral pTP, viral pol, host NFIA and host POU2F1/OCT1 on viral origin of replication. Covers the whole ssDNA genome during synthesis. The complementary strand synthesis induces its relese from DNA template. May inhibit cellular transcription mediated by the interaction between host SRCAP and CBP. The chain is DNA-binding protein from Homo sapiens (Human).